The following is a 712-amino-acid chain: Polyribonucleotide nucleotidyltransferase (712 aa).

Mg(2+) is bound by residues Asp485 and Asp491. Residues 552-615 (PRIHTIKINP…EAIRRIEAIT (64 aa)) form the KH domain. One can recognise an S1 motif domain in the interval 621–689 (NRIYEGKVVR…RQGRVRLSIK (69 aa)).

It belongs to the polyribonucleotide nucleotidyltransferase family. As to quaternary structure, component of the RNA degradosome, which is a multiprotein complex involved in RNA processing and mRNA degradation. Mg(2+) is required as a cofactor.

It is found in the cytoplasm. The catalysed reaction is RNA(n+1) + phosphate = RNA(n) + a ribonucleoside 5'-diphosphate. Functionally, involved in mRNA degradation. Catalyzes the phosphorolysis of single-stranded polyribonucleotides processively in the 3'- to 5'-direction. The polypeptide is Polyribonucleotide nucleotidyltransferase (Aeromonas hydrophila subsp. hydrophila (strain ATCC 7966 / DSM 30187 / BCRC 13018 / CCUG 14551 / JCM 1027 / KCTC 2358 / NCIMB 9240 / NCTC 8049)).